The sequence spans 352 residues: Peptide chain release factor 1 (352 aa).

The residue at position 233 (Q233) is an N5-methylglutamine. Residues 288 to 309 (NAKDRKEQVGSGDRSERIRTYN) form a disordered region. A compositionally biased stretch (basic and acidic residues) spans 289–306 (AKDRKEQVGSGDRSERIR).

Belongs to the prokaryotic/mitochondrial release factor family. Methylated by PrmC. Methylation increases the termination efficiency of RF1.

The protein resides in the cytoplasm. In terms of biological role, peptide chain release factor 1 directs the termination of translation in response to the peptide chain termination codons UAG and UAA. The sequence is that of Peptide chain release factor 1 from Helicobacter acinonychis (strain Sheeba).